Here is a 165-residue protein sequence, read N- to C-terminus: 3-isopropylmalate dehydratase small subunit (165 aa).

This sequence belongs to the LeuD family. LeuD type 2 subfamily. As to quaternary structure, heterodimer of LeuC and LeuD.

The catalysed reaction is (2R,3S)-3-isopropylmalate = (2S)-2-isopropylmalate. It participates in amino-acid biosynthesis; L-leucine biosynthesis; L-leucine from 3-methyl-2-oxobutanoate: step 2/4. In terms of biological role, catalyzes the isomerization between 2-isopropylmalate and 3-isopropylmalate, via the formation of 2-isopropylmaleate. This Helicobacter hepaticus (strain ATCC 51449 / 3B1) protein is 3-isopropylmalate dehydratase small subunit.